A 383-amino-acid chain; its full sequence is S-(hydroxymethyl)glutathione dehydrogenase (383 aa).

Position 51 (Cys51) interacts with Zn(2+). An NAD(+)-binding site is contributed by His52. The Zn(2+) site is built by His73, Glu74, Cys103, Cys106, Cys109, Cys117, and Cys180. NAD(+) contacts are provided by residues 205–210 (GAGCVG), Asp229, and 298–300 (IGV).

This sequence belongs to the zinc-containing alcohol dehydrogenase family. Class-III subfamily. Requires Zn(2+) as cofactor.

The enzyme catalyses a primary alcohol + NAD(+) = an aldehyde + NADH + H(+). It carries out the reaction a secondary alcohol + NAD(+) = a ketone + NADH + H(+). It catalyses the reaction S-(hydroxymethyl)glutathione + NADP(+) = S-formylglutathione + NADPH + H(+). The catalysed reaction is S-(hydroxymethyl)glutathione + NAD(+) = S-formylglutathione + NADH + H(+). The enzyme catalyses S-nitrosoglutathione + NADH + H(+) = S-(hydroxysulfenamide)glutathione + NAD(+). Its function is as follows. Oxidizes long-chain alcohols and, in the presence of glutathione, is able to oxidize formaldehyde. Also acts as a S-nitroso-glutathione reductase by catalyzing the NADH-dependent reduction of S-nitrosoglutathione, thereby regulating protein S-nitrosylation. This is S-(hydroxymethyl)glutathione dehydrogenase (FDH1) from Aspergillus oryzae (strain ATCC 42149 / RIB 40) (Yellow koji mold).